Consider the following 152-residue polypeptide: Aspartate carbamoyltransferase regulatory chain (152 aa).

Residues Cys107, Cys112, Cys136, and Cys139 each coordinate Zn(2+).

It belongs to the PyrI family. As to quaternary structure, contains catalytic and regulatory chains. Requires Zn(2+) as cofactor.

Its function is as follows. Involved in allosteric regulation of aspartate carbamoyltransferase. This is Aspartate carbamoyltransferase regulatory chain from Chromobacterium violaceum (strain ATCC 12472 / DSM 30191 / JCM 1249 / CCUG 213 / NBRC 12614 / NCIMB 9131 / NCTC 9757 / MK).